Here is a 251-residue protein sequence, read N- to C-terminus: Hydroxyacylglutathione hydrolase (251 aa).

Residues H53, H55, D57, H58, H110, D127, and H165 each contribute to the Zn(2+) site.

This sequence belongs to the metallo-beta-lactamase superfamily. Glyoxalase II family. As to quaternary structure, monomer. The cofactor is Zn(2+).

The catalysed reaction is an S-(2-hydroxyacyl)glutathione + H2O = a 2-hydroxy carboxylate + glutathione + H(+). Its pathway is secondary metabolite metabolism; methylglyoxal degradation; (R)-lactate from methylglyoxal: step 2/2. Its function is as follows. Thiolesterase that catalyzes the hydrolysis of S-D-lactoyl-glutathione to form glutathione and D-lactic acid. The sequence is that of Hydroxyacylglutathione hydrolase from Buchnera aphidicola subsp. Acyrthosiphon pisum (strain APS) (Acyrthosiphon pisum symbiotic bacterium).